The following is a 329-amino-acid chain: DNA-directed RNA polymerase subunit alpha (329 aa).

The alpha N-terminal domain (alpha-NTD) stretch occupies residues 1-235; the sequence is MQGSVTEFLK…EQLDAFVDLR (235 aa). Positions 249–329 are alpha C-terminal domain (alpha-CTD); sequence FDPILLRPVD…NWPPASIAED (81 aa).

Belongs to the RNA polymerase alpha chain family. Homodimer. The RNAP catalytic core consists of 2 alpha, 1 beta, 1 beta' and 1 omega subunit. When a sigma factor is associated with the core the holoenzyme is formed, which can initiate transcription.

It carries out the reaction RNA(n) + a ribonucleoside 5'-triphosphate = RNA(n+1) + diphosphate. Its function is as follows. DNA-dependent RNA polymerase catalyzes the transcription of DNA into RNA using the four ribonucleoside triphosphates as substrates. In Aliivibrio fischeri (strain ATCC 700601 / ES114) (Vibrio fischeri), this protein is DNA-directed RNA polymerase subunit alpha.